A 590-amino-acid chain; its full sequence is Regulatory solute carrier protein family 1 member 1 (590 aa).

4 disordered regions span residues 1-116 (MSSS…TQGL), 144-234 (EEGW…PDSE), 277-331 (SPSS…AEES), and 359-466 (EEVT…SHRT). Residues 16-35 (SSGQSPEAGNPTSLARSVSA) show a composition bias toward polar residues. The span at 78-91 (SPCAAAAAPSSAMP) shows a compositional bias: low complexity. The span at 150-161 (ENQNPSQVNDLQ) shows a compositional bias: polar residues. Basic and acidic residues-rich tracts occupy residues 162–179 (QHQE…RDAP) and 188–203 (PGER…REAT). Positions 313–331 (SSSSVCGSSQPPAESAEES) are enriched in low complexity. Polar residues predominate over residues 362-376 (TCQSEGTAWGQTRVN). Composition is skewed to basic and acidic residues over residues 380–395 (RWTE…DRPQ) and 404–420 (VKTE…RIED). Over residues 451–465 (SVTVTSAETSNQSHR) the composition is skewed to polar residues. Residues 544–584 (GFPAADIDRILRAGFTLQEALGALHRVGGNADLALLVLLAK) form the UBA domain.

Interacts with YRDC. Highly expressed in renal outer medulla, renal inner medulla, duodenum, ileum and jejunum. Moderately expressed in renal outer cortex, renal papilla, brain and liver.

The protein resides in the cell membrane. It localises to the nucleus. The protein localises to the golgi apparatus. It is found in the trans-Golgi network. In terms of biological role, mediates transcriptional and post-transcriptional regulation of SLC5A1. Inhibits a dynamin and PKC-dependent exocytotic pathway of SLC5A1. Also involved in transcriptional regulation of SLC22A2. Exhibits glucose-dependent, short-term inhibition of SLC5A1 and SLC22A2 by inhibiting the release of vesicles from the trans-Golgi network. This Oryctolagus cuniculus (Rabbit) protein is Regulatory solute carrier protein family 1 member 1 (RSC1A1).